The primary structure comprises 804 residues: MYVLNRKGEEEDISFDQILKRIQRLSYGLHKLGEYPACVTQGVINGMYSSIKTCELDELAAQTCAYMATTHPDFSILAARITTDNLHKNTSDDVAEVAEALYTYKDGRGRPASLISKEVYDFILLHKVRLNKEIDYTTHFNYDYFGFKTLERSYLLRINNKIIERPQHLLMRVSIGIHIDDIDKALETYHLMSQKYFTHATPTLFNSGTPRPQMSSCFLLSMKADSIEGIFETLKQCALISKTAGGIGVAVQDIRGQNSYIRGTNGISNGLVPMLRVFNDTARYVDQGGGKRKGSYAVYIEPWHSDIFEFLDLRKNHGKEELRARDLFYAVWVPDLFMKRVKENKNWTLMCPNECPGLSETWGEEFEKLYTKYEEENMGKKTVLAQDLWFAILQSQIETGVPIYLYKDSCNAKPIKNLGTIKCSNLCCEIIEYTSPDEVAVCNLASIALCKFVDLEKKEFNFKKLYEITKIITRNLDKIIERNYYPVKEAKTSNTRHRPIGIGVQGLADTFMLLRYLYESDAAKELNKRIYETMYYAALEMSVDWLQSGPYESYQGSPGSQGILQFDMWNAKVDNKYWDWDELKLKIAKTGLRNLLLLAPMPTASTSQILGNNESFEPYTSNIYYRRVLSGEFFVVNPHLLKDLFDRGLWDEDMKQQLIAHNGSIQYISEIPDDLKELYKTVWEIKQKNIIDMAADRGYFIDQSQSLNIYIQKPTFAKLSSMHFYGWEKGLKTGAYYLRTQAATDAIKFTVDTHVAKNAVKLKNADGVQITREVSRETIQLNQRYSKCVSFKSNNDEQCLMCSG.

In terms of domain architecture, ATP-cone spans 1-92 (MYVLNRKGEE…TDNLHKNTSD (92 aa)). Residues 5–6 (NR), 11–17 (EDISFDQ), T53, and D57 each bind ATP. S216 contacts GDP. A disulfide bridge links C217 with C442. Residues 225-227 (DSI), K242, R255, and 262-263 (RG) contribute to the dTTP site. N425 serves as a coordination point for GDP. Catalysis depends on N425, which acts as the Proton acceptor. Residue C427 is the Cysteine radical intermediate of the active site. GDP contacts are provided by residues E429 and 603–606 (TAST). E429 (proton acceptor) is an active-site residue.

This sequence belongs to the ribonucleoside diphosphate reductase large chain family. In terms of assembly, heterodimer of a large and a small subunit.

It carries out the reaction a 2'-deoxyribonucleoside 5'-diphosphate + [thioredoxin]-disulfide + H2O = a ribonucleoside 5'-diphosphate + [thioredoxin]-dithiol. Its activity is regulated as follows. Under complex allosteric control mediated by deoxynucleoside triphosphates and ATP binding to separate specificity and activation sites on the large subunit. The type of nucleotide bound at the specificity site determines substrate preference. It seems probable that ATP makes the enzyme reduce CDP and UDP, dGTP favors ADP reduction and dTTP favors GDP reduction. Stimulated by ATP and inhibited by dATP binding to the activity site. Provides the precursors necessary for DNA synthesis. Catalyzes the biosynthesis of deoxyribonucleotides from the corresponding ribonucleotides. In Plasmodium falciparum (isolate FCR-3 / Gambia), this protein is Ribonucleoside-diphosphate reductase large subunit (RNR1).